The primary structure comprises 509 residues: 2,3-bisphosphoglycerate-independent phosphoglycerate mutase (509 aa).

Mn(2+) contacts are provided by D14 and S64. The active-site Phosphoserine intermediate is S64. Substrate is bound by residues H125, 155-156 (RD), R187, R193, 259-262 (RADR), and K332. Mn(2+) contacts are provided by D399, H403, D440, H441, and H459.

It belongs to the BPG-independent phosphoglycerate mutase family. In terms of assembly, monomer. It depends on Mn(2+) as a cofactor.

It carries out the reaction (2R)-2-phosphoglycerate = (2R)-3-phosphoglycerate. The protein operates within carbohydrate degradation; glycolysis; pyruvate from D-glyceraldehyde 3-phosphate: step 3/5. In terms of biological role, catalyzes the interconversion of 2-phosphoglycerate and 3-phosphoglycerate. The sequence is that of 2,3-bisphosphoglycerate-independent phosphoglycerate mutase from Psychromonas ingrahamii (strain DSM 17664 / CCUG 51855 / 37).